The primary structure comprises 453 residues: Tol-Pal system protein TolB (453 aa).

The signal sequence occupies residues 1-34 (MYLIIKKTHKLPHWLQKVSLSIMLIIFLWKPALL).

Belongs to the TolB family. As to quaternary structure, the Tol-Pal system is composed of five core proteins: the inner membrane proteins TolA, TolQ and TolR, the periplasmic protein TolB and the outer membrane protein Pal. They form a network linking the inner and outer membranes and the peptidoglycan layer.

The protein resides in the periplasm. In terms of biological role, part of the Tol-Pal system, which plays a role in outer membrane invagination during cell division and is important for maintaining outer membrane integrity. TolB occupies a key intermediary position in the Tol-Pal system because it communicates directly with both membrane-embedded components, Pal in the outer membrane and TolA in the inner membrane. This Blochmanniella pennsylvanica (strain BPEN) protein is Tol-Pal system protein TolB.